The sequence spans 347 residues: NADH-ubiquinone oxidoreductase chain 2 (347 aa).

The next 11 helical transmembrane spans lie at 1-21 (MNPL…LITA), 25-45 (HWFL…PVLT), 55-75 (AAIK…MAIL), 96-116 (TMML…FWVP), 123-143 (TLMS…SIMY), 145-165 (IFPV…IMVG), 178-198 (ILAY…PYNP), 200-220 (ITIF…LALN), 237-257 (LTWL…LPPL), 274-294 (GTLI…YFYM), and 324-344 (FLLP…PLTF).

It belongs to the complex I subunit 2 family. In terms of assembly, core subunit of respiratory chain NADH dehydrogenase (Complex I) which is composed of 45 different subunits. Interacts with TMEM242.

It is found in the mitochondrion inner membrane. It carries out the reaction a ubiquinone + NADH + 5 H(+)(in) = a ubiquinol + NAD(+) + 4 H(+)(out). Its function is as follows. Core subunit of the mitochondrial membrane respiratory chain NADH dehydrogenase (Complex I) which catalyzes electron transfer from NADH through the respiratory chain, using ubiquinone as an electron acceptor. Essential for the catalytic activity and assembly of complex I. This chain is NADH-ubiquinone oxidoreductase chain 2, found in Hylobates lar (Lar gibbon).